Here is a 201-residue protein sequence, read N- to C-terminus: dTTP/UTP pyrophosphatase (201 aa).

Residue Asp80 is the Proton acceptor of the active site.

The protein belongs to the Maf family. YhdE subfamily. It depends on a divalent metal cation as a cofactor.

The protein localises to the cytoplasm. It carries out the reaction dTTP + H2O = dTMP + diphosphate + H(+). The catalysed reaction is UTP + H2O = UMP + diphosphate + H(+). In terms of biological role, nucleoside triphosphate pyrophosphatase that hydrolyzes dTTP and UTP. May have a dual role in cell division arrest and in preventing the incorporation of modified nucleotides into cellular nucleic acids. This chain is dTTP/UTP pyrophosphatase, found in Novosphingobium aromaticivorans (strain ATCC 700278 / DSM 12444 / CCUG 56034 / CIP 105152 / NBRC 16084 / F199).